We begin with the raw amino-acid sequence, 346 residues long: Elongation factor 1-alpha (346 aa).

Residues 1–127 form the tr-type G domain; sequence GTSQADVALL…DNVEPPKRPS (127 aa). Position 49 to 52 (49 to 52) interacts with GTP; the sequence is NKMD.

This sequence belongs to the TRAFAC class translation factor GTPase superfamily. Classic translation factor GTPase family. EF-Tu/EF-1A subfamily.

Its subcellular location is the cytoplasm. Its function is as follows. This protein promotes the GTP-dependent binding of aminoacyl-tRNA to the A-site of ribosomes during protein biosynthesis. The sequence is that of Elongation factor 1-alpha from Eimeria bovis.